We begin with the raw amino-acid sequence, 76 residues long: MDQEQLFDKLYSLNLQLTAKNDHKKRKPVFYPEWEKDPTDTNDAVYYGLRYKPEAKKTLRSTWMKSEFESHRSSSA.

This is an uncharacterized protein from African swine fever virus (isolate Tick/Malawi/Lil 20-1/1983) (ASFV).